The chain runs to 100 residues: Urease subunit gamma (100 aa).

The protein belongs to the urease gamma subunit family. As to quaternary structure, heterotrimer of UreA (gamma), UreB (beta) and UreC (alpha) subunits. Three heterotrimers associate to form the active enzyme.

The protein resides in the cytoplasm. It carries out the reaction urea + 2 H2O + H(+) = hydrogencarbonate + 2 NH4(+). Its pathway is nitrogen metabolism; urea degradation; CO(2) and NH(3) from urea (urease route): step 1/1. In Blochmanniella pennsylvanica (strain BPEN), this protein is Urease subunit gamma.